Consider the following 404-residue polypeptide: Nicotinate phosphoribosyltransferase (404 aa).

H225 is modified (phosphohistidine; by autocatalysis).

Belongs to the NAPRTase family. In terms of processing, transiently phosphorylated on a His residue during the reaction cycle. Phosphorylation strongly increases the affinity for substrates and increases the rate of nicotinate D-ribonucleotide production. Dephosphorylation regenerates the low-affinity form of the enzyme, leading to product release.

It carries out the reaction nicotinate + 5-phospho-alpha-D-ribose 1-diphosphate + ATP + H2O = nicotinate beta-D-ribonucleotide + ADP + phosphate + diphosphate. The protein operates within cofactor biosynthesis; NAD(+) biosynthesis; nicotinate D-ribonucleotide from nicotinate: step 1/1. In terms of biological role, catalyzes the synthesis of beta-nicotinate D-ribonucleotide from nicotinate and 5-phospho-D-ribose 1-phosphate at the expense of ATP. In Methanosarcina acetivorans (strain ATCC 35395 / DSM 2834 / JCM 12185 / C2A), this protein is Nicotinate phosphoribosyltransferase.